A 408-amino-acid polypeptide reads, in one-letter code: Argininosuccinate synthase (408 aa).

ATP is bound by residues 14-22 (AYSGGLDTS) and A41. Residues Y92 and S97 each contribute to the L-citrulline site. G122 serves as a coordination point for ATP. The L-aspartate site is built by T124, N128, and D129. Position 128 (N128) interacts with L-citrulline. Positions 132, 181, 190, 266, and 278 each coordinate L-citrulline.

It belongs to the argininosuccinate synthase family. Type 1 subfamily. Homotetramer.

The protein resides in the cytoplasm. The enzyme catalyses L-citrulline + L-aspartate + ATP = 2-(N(omega)-L-arginino)succinate + AMP + diphosphate + H(+). Its pathway is amino-acid biosynthesis; L-arginine biosynthesis; L-arginine from L-ornithine and carbamoyl phosphate: step 2/3. The sequence is that of Argininosuccinate synthase from Pelobacter propionicus (strain DSM 2379 / NBRC 103807 / OttBd1).